Consider the following 364-residue polypeptide: Cobalt-precorrin-5B C(1)-methyltransferase (364 aa).

This sequence belongs to the CbiD family.

It catalyses the reaction Co-precorrin-5B + S-adenosyl-L-methionine = Co-precorrin-6A + S-adenosyl-L-homocysteine. It functions in the pathway cofactor biosynthesis; adenosylcobalamin biosynthesis; cob(II)yrinate a,c-diamide from sirohydrochlorin (anaerobic route): step 6/10. Catalyzes the methylation of C-1 in cobalt-precorrin-5B to form cobalt-precorrin-6A. This Thermoplasma acidophilum (strain ATCC 25905 / DSM 1728 / JCM 9062 / NBRC 15155 / AMRC-C165) protein is Cobalt-precorrin-5B C(1)-methyltransferase.